We begin with the raw amino-acid sequence, 330 residues long: uncharacterized protein (330 aa).

Residues 4-242 (LSIQNLVVEY…AGEVLFEQST (239 aa)) form the ABC transporter domain. 40-47 (GPSGCGKT) contributes to the ATP binding site. 210-330 (DRVVELTPDF…LIEHRALAND (121 aa)) is an a nucleoside 3',5'-cyclic phosphate binding site.

This sequence belongs to the ABC transporter superfamily. In terms of assembly, the complex is composed of two ATP-binding proteins (MT0079), two transmembrane proteins (MT0078) and a solute-binding protein.

Functionally, probably part of an ABC transporter complex. Probably responsible for energy coupling to the transport system. This is an uncharacterized protein from Mycobacterium tuberculosis (strain CDC 1551 / Oshkosh).